The primary structure comprises 433 residues: C2H2 type master regulator of conidiophore development brlA (433 aa).

2 disordered regions span residues 23–54 and 238–268; these read PSECPSMTSSFSPLDSPTPTPTSLYSQGSMAS and TFKSHTPSTPHRSVSMGTPSGSDTPVSRMSG. Residues 30–48 show a composition bias toward low complexity; the sequence is TSSFSPLDSPTPTPTSLYS. The segment covering 238-264 has biased composition (polar residues); sequence TFKSHTPSTPHRSVSMGTPSGSDTPVS. C2H2-type zinc fingers lie at residues 321 to 345 and 351 to 376; these read FKCKEPGCKGRFKRQEHLKRHMKSH and HVCWVPGCHRAFSRSDNLNAHYTKTH. Positions 391–423 are disordered; sequence ETSQDFDPDFRGQLTPDGRPIYGSKLEDSMPDC.

It is found in the nucleus. In terms of biological role, brlA, abaA and wetA are pivotal regulators of conidiophore development and conidium maturation. They act individually and together to regulate their own expression and that of numerous other sporulation-specific genes. Binds promoters of target genes at brlA response elements (BREs) containing the conserved sequence 5'-(C/A)(A/G)AGGG(G/A)-3'. The polypeptide is C2H2 type master regulator of conidiophore development brlA (Penicillium camemberti (strain FM 013)).